The primary structure comprises 273 residues: Large ribosomal subunit protein uL2 (273 aa).

Disordered stretches follow at residues 30 to 50 (YAPLLDTKSKTGGRNNFGRIT) and 221 to 273 (RGTA…RRGK). The span at 253–273 (KGKKTRHNKRTDKFIVRRRGK) shows a compositional bias: basic residues.

Belongs to the universal ribosomal protein uL2 family. In terms of assembly, part of the 50S ribosomal subunit. Forms a bridge to the 30S subunit in the 70S ribosome.

One of the primary rRNA binding proteins. Required for association of the 30S and 50S subunits to form the 70S ribosome, for tRNA binding and peptide bond formation. It has been suggested to have peptidyltransferase activity; this is somewhat controversial. Makes several contacts with the 16S rRNA in the 70S ribosome. This chain is Large ribosomal subunit protein uL2, found in Pasteurella multocida (strain Pm70).